A 2291-amino-acid chain; its full sequence is Protein Ycf2 (2291 aa).

Residue 1645-1652 (GSIGTGRS) participates in ATP binding.

The protein belongs to the Ycf2 family.

Its subcellular location is the plastid. The protein resides in the chloroplast stroma. Functionally, probable ATPase of unknown function. Its presence in a non-photosynthetic plant (Epifagus virginiana) and experiments in tobacco indicate that it has an essential function which is probably not related to photosynthesis. The sequence is that of Protein Ycf2 from Olimarabidopsis pumila (Dwarf rocket).